The chain runs to 469 residues: MLKVTVPSCPSSPCSSVTASTENLVPDYWIDGSNRDPLGDFFEVESELGRGATSIVYRCKQKGTQKPYALKVLKKTVDKKIVRTEIGVLLRLSHPNIIKLKEIFETPTEISLVLELVTGGELFDRIVEKGYYSERDARDAVKQILEAVAYLHENGIVHRDLKPENLLYATPAPDAPLKIADFGLSKIVEHQVLMKTVCGTPGYCAPEILRGCAYGPEVDMWSVGIITYILLCGFEPFYDERGDQFMFRRILNCEYYFISPWWDEVSLNAKDLVKKLIVLDPKKRLTTFQALQHPWVTGKAANFVHMDTAQKKLQEFNARRKLKAAVKAVVASSRLGSASSSHTSIQENHKASSDPPSTQDAKDSTDLLGKKMQEEDQEEDQVEAEASADEMRKLQSEEVEKDAGVKEEETSSMVPQDPEDELETDDPEMKRDSEEKLKSVEEEMDPMTEEEAPDAGLGVPQQDAIQPEY.

Phosphoserine; by autocatalysis occurs at positions 11 and 12. A Protein kinase domain is found at 42–296 (FEVESELGRG…TFQALQHPWV (255 aa)). ATP contacts are provided by residues 48–56 (LGRGATSIV) and lysine 71. O-linked (GlcNAc) threonine glycosylation occurs at threonine 53. O-linked (GlcNAc) serine glycosylation is present at serine 54. The O-linked (GlcNAc) serine glycan is linked to serine 133. Aspartate 160 functions as the Proton acceptor in the catalytic mechanism. O-linked (GlcNAc) serine glycosylation occurs at serine 185. Residue threonine 196 is modified to Phosphothreonine. Residues 297–336 (TGKAANFVHMDTAQKKLQEFNARRKLKAAVKAVVASSRLG) form an autoinhibitory domain region. The interval 302 to 319 (NFVHMDTAQKKLQEFNAR) is PP2A-binding. The segment at 318-337 (ARRKLKAAVKAVVASSRLGS) is calmodulin-binding. A Phosphoserine; by autocatalysis modification is found at serine 332. A disordered region spans residues 336–469 (GSASSSHTSI…PQQDAIQPEY (134 aa)). A Phosphoserine modification is found at serine 337. Serine 340, serine 341, and serine 352 each carry an O-linked (GlcNAc) serine glycan. Positions 360-374 (DAKDSTDLLGKKMQE) are enriched in basic and acidic residues. Residues 375 to 388 (EDQEEDQVEAEASA) show a composition bias toward acidic residues. Basic and acidic residues predominate over residues 389-409 (DEMRKLQSEEVEKDAGVKEEE). Residues 417–426 (DPEDELETDD) are compositionally biased toward acidic residues. Basic and acidic residues predominate over residues 427–441 (PEMKRDSEEKLKSVE). Phosphoserine is present on residues serine 433 and serine 439. The segment covering 442–453 (EEMDPMTEEEAP) has biased composition (acidic residues).

This sequence belongs to the protein kinase superfamily. CAMK Ser/Thr protein kinase family. CaMK subfamily. Monomer. Interacts with protein phosphatase 2A (PPP2CA/PPP2CB); the interaction is mutually exclusive with binding to Ca(2+)/calmodulin. In terms of processing, phosphorylated by CaMKK1 and CaMKK2 on Thr-196. Dephosphorylated by protein phosphatase 2A. Autophosphorylated on Ser-11 and Ser-12. Glycosylation at Ser-185 modulates the phosphorylation of CaMK4 at Thr-196 and negatively regulates its activity toward CREB1 in basal conditions and during early inomycin stimulation. In terms of tissue distribution, expressed in brain and testis.

The protein localises to the cytoplasm. The protein resides in the nucleus. It catalyses the reaction L-seryl-[protein] + ATP = O-phospho-L-seryl-[protein] + ADP + H(+). The catalysed reaction is L-threonyl-[protein] + ATP = O-phospho-L-threonyl-[protein] + ADP + H(+). Its activity is regulated as follows. Activated by Ca(2+)/calmodulin. Binding of calmodulin results in conformational change that relieves intrasteric autoinhibition and allows phosphorylation of Thr-196 within the activation loop by CaMKK1 or CaMKK2. Phosphorylation of Thr-196 results in a 10-20-fold increase in total activity to generate Ca(2+)/calmodulin-independent activity. Autophosphorylation of the N-terminus Ser-11 and Ser-12 is required for full activation. Inactivated by protein phosphatase 2A (PPP2CA/PPP2CB) which dephosphorylates Thr-196, thereby terminating autonomous activity and helping to maintain the enzyme in its autoinhibited state. In terms of biological role, calcium/calmodulin-dependent protein kinase that operates in the calcium-triggered CaMKK-CaMK4 signaling cascade and regulates, mainly by phosphorylation, the activity of several transcription activators, such as CREB1, MEF2D, JUN and RORA, which play pivotal roles in immune response, inflammation, and memory consolidation. In the thymus, regulates the CD4(+)/CD8(+) double positive thymocytes selection threshold during T-cell ontogeny. In CD4 memory T-cells, is required to link T-cell antigen receptor (TCR) signaling to the production of IL2, IFNG and IL4 (through the regulation of CREB and MEF2). Regulates the differentiation and survival phases of osteoclasts and dendritic cells (DCs). Mediates DCs survival by linking TLR4 and the regulation of temporal expression of BCL2. Phosphorylates the transcription activator CREB1 on 'Ser-133' in hippocampal neuron nuclei and contribute to memory consolidation and long term potentiation (LTP) in the hippocampus. Can activate the MAP kinases MAPK1/ERK2, MAPK8/JNK1 and MAPK14/p38 and stimulate transcription through the phosphorylation of ELK1 and ATF2. Can also phosphorylate in vitro CREBBP, PRM2, MEF2A and STMN1/OP18. May be involved in spermatogenesis. The sequence is that of Calcium/calmodulin-dependent protein kinase type IV (Camk4) from Mus musculus (Mouse).